The following is a 185-amino-acid chain: MKTAQELRVGNVVQIGSDAWVIAKAEYNKSGRNSAVVKMKMKNLLTNAGQEAVYKADDKFDVVVLDRKEVTYSYFADPMYVFMDADYNQFEVEAEMMGEALNYLEDGMACEVVFYNEKAISVELPTVLVREITYTEPAVKGDTSSGKVLKNAKLATGFELQVPLFCNTGDKIEIDTRTNEYRSRA.

It belongs to the elongation factor P family.

The protein resides in the cytoplasm. It functions in the pathway protein biosynthesis; polypeptide chain elongation. Involved in peptide bond synthesis. Stimulates efficient translation and peptide-bond synthesis on native or reconstituted 70S ribosomes in vitro. Probably functions indirectly by altering the affinity of the ribosome for aminoacyl-tRNA, thus increasing their reactivity as acceptors for peptidyl transferase. This chain is Elongation factor P, found in Burkholderia lata (strain ATCC 17760 / DSM 23089 / LMG 22485 / NCIMB 9086 / R18194 / 383).